A 481-amino-acid polypeptide reads, in one-letter code: Trigger factor (481 aa).

Residues 174–261 (GDIAVVSFKG…LKDLKEKELP (88 aa)) enclose the PPIase FKBP-type domain. The interval 435–481 (VKEKTTKASQASKTTKAKKTTTKTTKATKTATKTTKATKTQNKKEKK) is disordered. Residues 456 to 474 (TKTTKATKTATKTTKATKT) are compositionally biased toward low complexity.

The protein belongs to the FKBP-type PPIase family. Tig subfamily.

Its subcellular location is the cytoplasm. It catalyses the reaction [protein]-peptidylproline (omega=180) = [protein]-peptidylproline (omega=0). Involved in protein export. Acts as a chaperone by maintaining the newly synthesized protein in an open conformation. Functions as a peptidyl-prolyl cis-trans isomerase. This Prochlorococcus marinus (strain MIT 9312) protein is Trigger factor.